Consider the following 473-residue polypeptide: MSMKISEKKFNDRVGDGIQDSFMRGAVSSAQTRLYTNRLKAADELGNWEEWRELGEQIRQHTLENLDYYLMQLSENVSKRGGHVYFAKTKEEAAKYIQDVAKKKQAKKVVKSKSMVTEEISMNHALEEIGCEVLESDLGEYILQVDNDPPSHIIAPALHKNRTQIRDVFKEKLGYENSDDPYEMTKFVRKQLREKFMDAEIGVTGCNFAVANTGSLCLVTNEGNADLVMSIPKTQIAVMGMERMVPTMEELDVLVGLLCRSAVGQKLTSYVTVAGPIQEEEVDGPEEFHLVVVDNGRSQILGSEFRSVLQCIRCAACVNVCPVYRHVGGHSYGSIYSGPIGAVLTPLLGGYDDYKELPYASSLCGACTEACPVKIPLHDLLLKHRQVIVEQEGRAPLAEKLAMKMFSMGASSAALYKMGSKMAPAAMSPFTSGNRVSKGVGPLKNWTDIREFPAPSKERFRDWYKDHKKGGDK.

4Fe-4S ferredoxin-type domains are found at residues 302-332 (GSEF…GHSY) and 351-380 (YDDY…LHDL). [4Fe-4S] cluster-binding residues include Cys-311, Cys-314, Cys-317, Cys-321, Cys-364, Cys-367, and Cys-371.

Belongs to the LutB/YkgF family.

Its function is as follows. Is involved in L-lactate degradation and allows cells to grow with lactate as the sole carbon source. Has probably a role as an electron transporter during oxidation of L-lactate. The protein is Lactate utilization protein B of Bacillus cereus (strain G9842).